The chain runs to 204 residues: Translation initiation factor 2 subunit beta (204 aa).

The region spanning 146-204 (AIEEGKELEVHIESISKKGDGVARIGKYILYVAGTKAGQNVKVRITRISGQVAFTQKIL) is the TRAM domain.

Belongs to the eIF-2-beta/eIF-5 family. As to quaternary structure, heterotrimer composed of an alpha, a beta and a gamma chain.

Its function is as follows. eIF-2 functions in the early steps of protein synthesis by forming a ternary complex with GTP and initiator tRNA. This Methanocorpusculum labreanum (strain ATCC 43576 / DSM 4855 / Z) protein is Translation initiation factor 2 subunit beta.